The chain runs to 130 residues: ER membrane protein complex subunit 5 (130 aa).

Topologically, residues 1-3 are cytoplasmic; sequence MAS. The helical transmembrane segment at 4-22 threads the bilayer; that stretch reads SFWKGVVGIGLFALAHAAF. At 23–43 the chain is on the lumenal side; sequence SAAQHRSYMRLTEKENETLPI. A helical transmembrane segment spans residues 44–63; sequence DIVLQTLLSFVITCYGIVHI. The Cytoplasmic segment spans residues 64-130; it reads SGEFKDMDAS…LRLRKLENFH (67 aa).

This sequence belongs to the membrane magnesium transporter (TC 1.A.67) family. Component of the ER membrane protein complex (EMC).

It localises to the endoplasmic reticulum membrane. It is found in the golgi apparatus membrane. The protein resides in the early endosome membrane. Part of the endoplasmic reticulum membrane protein complex (EMC) that enables the energy-independent insertion into endoplasmic reticulum membranes of newly synthesized membrane proteins. Preferentially accommodates proteins with transmembrane domains that are weakly hydrophobic or contain destabilizing features such as charged and aromatic residues. Involved in the cotranslational insertion of multi-pass membrane proteins in which stop-transfer membrane-anchor sequences become ER membrane spanning helices. It is also required for the post-translational insertion of tail-anchored/TA proteins in endoplasmic reticulum membranes. By mediating the proper cotranslational insertion of N-terminal transmembrane domains in an N-exo topology, with translocated N-terminus in the lumen of the ER, controls the topology of multi-pass membrane proteins like the G protein-coupled receptors. By regulating the insertion of various proteins in membranes, it is indirectly involved in many cellular processes. May be involved in Mg(2+) transport. The sequence is that of ER membrane protein complex subunit 5 from Danio rerio (Zebrafish).